The following is a 132-amino-acid chain: NADH-quinone oxidoreductase subunit I 1 (132 aa).

4Fe-4S ferredoxin-type domains lie at 42-71 and 81-110; these read LKVSHDKAKCVACYLCPTVCPAKCITVEAG and ERYEIDMLRCIFCGYCVEACPVDALKMTGQ. Positions 51, 54, 57, 61, 90, 93, 96, and 100 each coordinate [4Fe-4S] cluster.

Belongs to the complex I 23 kDa subunit family. In terms of assembly, NDH-1 is composed of 14 different subunits. Subunits NuoA, H, J, K, L, M, N constitute the membrane sector of the complex. It depends on [4Fe-4S] cluster as a cofactor.

It localises to the cell inner membrane. The enzyme catalyses a quinone + NADH + 5 H(+)(in) = a quinol + NAD(+) + 4 H(+)(out). Its function is as follows. NDH-1 shuttles electrons from NADH, via FMN and iron-sulfur (Fe-S) centers, to quinones in the respiratory chain. The immediate electron acceptor for the enzyme in this species is believed to be ubiquinone. Couples the redox reaction to proton translocation (for every two electrons transferred, four hydrogen ions are translocated across the cytoplasmic membrane), and thus conserves the redox energy in a proton gradient. In Geobacter sulfurreducens (strain ATCC 51573 / DSM 12127 / PCA), this protein is NADH-quinone oxidoreductase subunit I 1.